The primary structure comprises 863 residues: Probable beta-glucosidase A (863 aa).

The first 19 residues, 1–19, serve as a signal peptide directing secretion; sequence MKLGWLEAAALTAASVASA. Asparagine 65, asparagine 214, and asparagine 255 each carry an N-linked (GlcNAc...) asparagine glycan. The active site involves aspartate 283. N-linked (GlcNAc...) asparagine glycans are attached at residues asparagine 318, asparagine 325, asparagine 357, asparagine 493, asparagine 526, asparagine 545, asparagine 567, asparagine 664, and asparagine 715. Positions 720 to 754 are disordered; sequence KESSGDPNYGWDDEDYIPEGAKDGSPQDVLPSGGG.

This sequence belongs to the glycosyl hydrolase 3 family.

Its subcellular location is the secreted. It catalyses the reaction Hydrolysis of terminal, non-reducing beta-D-glucosyl residues with release of beta-D-glucose.. It participates in glycan metabolism; cellulose degradation. Its function is as follows. Beta-glucosidases are one of a number of cellulolytic enzymes involved in the degradation of cellulosic biomass. Catalyzes the last step releasing glucose from the inhibitory cellobiose. The chain is Probable beta-glucosidase A (bglA) from Emericella nidulans (strain FGSC A4 / ATCC 38163 / CBS 112.46 / NRRL 194 / M139) (Aspergillus nidulans).